The chain runs to 132 residues: MAREFSRTQRVAQEMQKEIAIILQREVKDPRVGMATVSGVEVSRDLAYAKVFVTFLNDGEPETVKSGLKALQDASGFIRMLLGKAMRLRVVPELTFAYDASLVEGMRMSNLVSNVVKDDAARRSAADRDEEA.

This sequence belongs to the RbfA family. Monomer. Binds 30S ribosomal subunits, but not 50S ribosomal subunits or 70S ribosomes.

The protein resides in the cytoplasm. Functionally, one of several proteins that assist in the late maturation steps of the functional core of the 30S ribosomal subunit. Associates with free 30S ribosomal subunits (but not with 30S subunits that are part of 70S ribosomes or polysomes). Required for efficient processing of 16S rRNA. May interact with the 5'-terminal helix region of 16S rRNA. This Edwardsiella ictaluri (strain 93-146) protein is Ribosome-binding factor A.